The chain runs to 633 residues: NADH-quinone oxidoreductase subunit L (633 aa).

14 helical membrane-spanning segments follow: residues 8–28 (HYTWLLVALPLAGAAILLFGG), 34–54 (WGHLLGCAAALAAFGVGAMLL), 95–115 (FVLLISGVGSLIHIYSVGYMA), 123–143 (FFGYLNLFLASMLLLVVADNY), 188–208 (LAVGMFLTFSTFGTLSYAGVF), 209–229 (AGVPAASRAVLTAIGLLMLLG), 251–271 (TPVSALIHAATMVTAGVYLIV), 284–304 (QLAVVIVGAVTLLFGAIIGCA), 322–342 (YMVLAAGLGPAGYAFAIMHLL), 382–402 (FATFGLAYLAIIGVPPFAGFF), 412–432 (LGAGGIRGSLLGGAALLGAGV), 468–488 (MILLAVGSVFSGGLLAVGGTL), 505–525 (ALPTWVATTLALGVVAVGIAV), and 613–633 (ALSMLVGAVLVAAALLVVQLW).

This sequence belongs to the complex I subunit 5 family.

The protein resides in the cell membrane. The enzyme catalyses a quinone + NADH + 5 H(+)(in) = a quinol + NAD(+) + 4 H(+)(out). In terms of biological role, NDH-1 shuttles electrons from NADH, via FMN and iron-sulfur (Fe-S) centers, to quinones in the respiratory chain. The immediate electron acceptor for the enzyme in this species is believed to be menaquinone. Couples the redox reaction to proton translocation (for every two electrons transferred, four hydrogen ions are translocated across the cytoplasmic membrane), and thus conserves the redox energy in a proton gradient. This chain is NADH-quinone oxidoreductase subunit L (nuoL), found in Mycobacterium tuberculosis (strain CDC 1551 / Oshkosh).